Reading from the N-terminus, the 504-residue chain is ATP synthase subunit alpha, chloroplastic (504 aa).

170 to 177 (GDRQTGKT) contributes to the ATP binding site.

This sequence belongs to the ATPase alpha/beta chains family. In terms of assembly, F-type ATPases have 2 components, CF(1) - the catalytic core - and CF(0) - the membrane proton channel. CF(1) has five subunits: alpha(3), beta(3), gamma(1), delta(1), epsilon(1). CF(0) has four main subunits: a, b, b' and c.

It localises to the plastid. Its subcellular location is the chloroplast thylakoid membrane. The enzyme catalyses ATP + H2O + 4 H(+)(in) = ADP + phosphate + 5 H(+)(out). Functionally, produces ATP from ADP in the presence of a proton gradient across the membrane. The alpha chain is a regulatory subunit. The protein is ATP synthase subunit alpha, chloroplastic of Triticum aestivum (Wheat).